We begin with the raw amino-acid sequence, 434 residues long: Innexin-14 (434 aa).

The next 4 helical transmembrane spans lie at L30 to G50, W106 to A126, I301 to V321, and Y365 to K385.

This sequence belongs to the pannexin family.

It localises to the cell membrane. It is found in the cell junction. The protein localises to the gap junction. Structural component of the gap junctions. This chain is Innexin-14 (inx-14), found in Caenorhabditis elegans.